We begin with the raw amino-acid sequence, 428 residues long: tRNA modification GTPase MnmE (428 aa).

3 residues coordinate (6S)-5-formyl-5,6,7,8-tetrahydrofolate: R20, E76, and R116. The region spanning 212–351 is the TrmE-type G domain; sequence GFEVAIVGAP…LVAAIGERLL (140 aa). Residue N222 coordinates K(+). GTP contacts are provided by residues 222–227, 241–247, and 266–269; these read NAGKST, SEIAGTT, and DTAG. S226 is a binding site for Mg(2+). Residues S241, I243, and T246 each coordinate K(+). Mg(2+) is bound at residue T247. K428 is a (6S)-5-formyl-5,6,7,8-tetrahydrofolate binding site.

The protein belongs to the TRAFAC class TrmE-Era-EngA-EngB-Septin-like GTPase superfamily. TrmE GTPase family. As to quaternary structure, homodimer. Heterotetramer of two MnmE and two MnmG subunits. K(+) serves as cofactor.

The protein localises to the cytoplasm. Functionally, exhibits a very high intrinsic GTPase hydrolysis rate. Involved in the addition of a carboxymethylaminomethyl (cmnm) group at the wobble position (U34) of certain tRNAs, forming tRNA-cmnm(5)s(2)U34. The sequence is that of tRNA modification GTPase MnmE from Cereibacter sphaeroides (strain ATCC 17029 / ATH 2.4.9) (Rhodobacter sphaeroides).